Reading from the N-terminus, the 189-residue chain is dCTP deaminase (189 aa).

Residues Lys-112–Arg-117, Thr-136–Glu-138, Gln-157, Tyr-171, and Gln-181 each bind dCTP. The Proton donor/acceptor role is filled by Glu-138.

Belongs to the dCTP deaminase family. Homotrimer.

It carries out the reaction dCTP + H2O + H(+) = dUTP + NH4(+). The protein operates within pyrimidine metabolism; dUMP biosynthesis; dUMP from dCTP (dUTP route): step 1/2. Its function is as follows. Catalyzes the deamination of dCTP to dUTP. This Acinetobacter baumannii (strain SDF) protein is dCTP deaminase.